We begin with the raw amino-acid sequence, 379 residues long: Chaperone protein DnaJ (379 aa).

The J domain occupies 5-69; it reads EYYERLGVDK…QKRAAYDQYG (65 aa). The CR-type zinc-finger motif lies at 141–223; that stretch reads GVEKQVKYNR…CHGSGHEKVA (83 aa). Positions 154, 157, 171, 174, 197, 200, 211, and 214 each coordinate Zn(2+). CXXCXGXG motif repeat units lie at residues 154-161, 171-178, 197-204, and 211-218; these read CHTCGGSG, CHKCGGRG, CDVCNGTG, and CETCHGSG.

The protein belongs to the DnaJ family. In terms of assembly, homodimer. Requires Zn(2+) as cofactor.

Its subcellular location is the cytoplasm. In terms of biological role, participates actively in the response to hyperosmotic and heat shock by preventing the aggregation of stress-denatured proteins and by disaggregating proteins, also in an autonomous, DnaK-independent fashion. Unfolded proteins bind initially to DnaJ; upon interaction with the DnaJ-bound protein, DnaK hydrolyzes its bound ATP, resulting in the formation of a stable complex. GrpE releases ADP from DnaK; ATP binding to DnaK triggers the release of the substrate protein, thus completing the reaction cycle. Several rounds of ATP-dependent interactions between DnaJ, DnaK and GrpE are required for fully efficient folding. Also involved, together with DnaK and GrpE, in the DNA replication of plasmids through activation of initiation proteins. In Lactococcus lactis subsp. lactis (strain IL1403) (Streptococcus lactis), this protein is Chaperone protein DnaJ.